Consider the following 84-residue polypeptide: Small ribosomal subunit protein uS17 (84 aa).

It belongs to the universal ribosomal protein uS17 family. As to quaternary structure, part of the 30S ribosomal subunit.

One of the primary rRNA binding proteins, it binds specifically to the 5'-end of 16S ribosomal RNA. This Photobacterium profundum (strain SS9) protein is Small ribosomal subunit protein uS17.